Here is a 636-residue protein sequence, read N- to C-terminus: Topoisomerase I damage affected protein 7 (636 aa).

The span at 1 to 18 (MNSNSTIGRTTLGESDTI) shows a compositional bias: polar residues. Disordered regions lie at residues 1 to 33 (MNSN…NSRS), 87 to 109 (TLVS…QYDP), 238 to 271 (ISSP…SSTN), 299 to 326 (PTSS…DDTT), and 339 to 362 (QSTT…STSP). N4 carries an N-linked (GlcNAc...) asparagine glycan. Low complexity-rich tracts occupy residues 19 to 33 (SLSF…NSRS) and 87 to 108 (TLVS…SQYD). N-linked (GlcNAc...) asparagine glycosylation is present at N257. Residues 457-477 (IVGSVVGSVGGILICVLVVWF) traverse the membrane as a helical segment. N492 carries N-linked (GlcNAc...) asparagine glycosylation. The span at 510–541 (QAKEASLQAQDSGSQQRNTETASANNPFSNEF) shows a compositional bias: polar residues. The tract at residues 510-551 (QAKEASLQAQDSGSQQRNTETASANNPFSNEFNFKARGNPPP) is disordered. K512 participates in a covalent cross-link: Glycyl lysine isopeptide (Lys-Gly) (interchain with G-Cter in ubiquitin). Residues N557, N562, and N626 are each glycosylated (N-linked (GlcNAc...) asparagine). Residue S628 is modified to Phosphoserine.

It belongs to the TDA7 family.

The protein resides in the vacuole membrane. The protein is Topoisomerase I damage affected protein 7 (TDA7) of Saccharomyces cerevisiae (strain YJM789) (Baker's yeast).